Consider the following 277-residue polypeptide: Thiamine thiazole synthase (277 aa).

NAD(+)-binding positions include S36, G63, V126, and 152–154 (HVD). Residues D154 and H169 each contribute to the Fe cation site. M230 contacts NAD(+). R240 contributes to the glycine binding site.

It belongs to the THI4 family. Homooctamer; tetramer of dimers. It depends on Fe(2+) as a cofactor.

It carries out the reaction hydrogen sulfide + glycine + NAD(+) = ADP-5-ethyl-4-methylthiazole-2-carboxylate + nicotinamide + 3 H2O + H(+). Its pathway is cofactor biosynthesis; thiamine diphosphate biosynthesis. In terms of biological role, involved in the biosynthesis of the thiazole moiety of thiamine. Catalyzes the conversion of NAD and glycine to adenosine diphosphate 5-(2-hydroxyethyl)-4-methylthiazole-2-carboxylate (ADT), an adenylated thiazole intermediate, using free sulfide as a source of sulfur. The protein is Thiamine thiazole synthase of Fervidobacterium nodosum (strain ATCC 35602 / DSM 5306 / Rt17-B1).